Here is a 713-residue protein sequence, read N- to C-terminus: Calpain-1 catalytic subunit (713 aa).

The Calpain catalytic domain occupies 55–354 (LFQDDAFPPV…FTKLEICNLT (300 aa)). Residues cysteine 115, histidine 272, and asparagine 296 contribute to the active site. Residue threonine 354 is modified to Phosphothreonine. A domain III region spans residues 355–525 (PDALKSRTLR…KKAGTQELDD (171 aa)). The linker stretch occupies residues 526–541 (QIQANLPDEKVLSEEE). Positions 542 to 712 (IDDNFKTLFS…LFKWLQLTMF (171 aa)) are domain IV. EF-hand domains are found at residues 557–575 (DMEI…IISK), 584–609 (FSLE…LVEF), 614–649 (NRIR…AGFK), and 679–713 (VRLE…TMFA). The Ca(2+) site is built by aspartate 597, aspartate 599, asparagine 601, lysine 603, glutamate 608, aspartate 627, aspartate 629, serine 631, serine 633, and glutamate 638.

This sequence belongs to the peptidase C2 family. As to quaternary structure, forms a heterodimer with a small (regulatory) subunit CAPNS1. The cofactor is Ca(2+). In terms of processing, undergoes calcium-induced successive autoproteolytic cleavages that generate a membrane-bound 78 kDa active form and an intracellular 75 kDa active form. Calpastatin reduces with high efficiency the transition from 78 kDa to 75 kDa calpain forms.

It localises to the cytoplasm. Its subcellular location is the cell membrane. It carries out the reaction Broad endopeptidase specificity.. With respect to regulation, activated by micromolar concentrations of calcium and inhibited by calpastatin. In terms of biological role, calcium-regulated non-lysosomal thiol-protease which catalyzes limited proteolysis of substrates involved in cytoskeletal remodeling and signal transduction. Proteolytically cleaves CTBP1 at 'Asn-364', 'Gly-377' and 'His-399'. Cleaves and activates caspase-7 (CASP7). This is Calpain-1 catalytic subunit from Rattus norvegicus (Rat).